The primary structure comprises 258 residues: Acetylglutamate kinase (258 aa).

Residues 44 to 45 (GG), Arg-66, and Asn-158 each bind substrate. Residues 181–186 (DVSGIL) and 209–211 (IIT) each bind ATP.

Belongs to the acetylglutamate kinase family. ArgB subfamily. As to quaternary structure, homodimer.

It localises to the cytoplasm. It carries out the reaction N-acetyl-L-glutamate + ATP = N-acetyl-L-glutamyl 5-phosphate + ADP. The protein operates within amino-acid biosynthesis; L-arginine biosynthesis; N(2)-acetyl-L-ornithine from L-glutamate: step 2/4. Functionally, catalyzes the ATP-dependent phosphorylation of N-acetyl-L-glutamate. This Shigella sonnei (strain Ss046) protein is Acetylglutamate kinase.